Here is a 765-residue protein sequence, read N- to C-terminus: Phosphoribosylformylglycinamidine synthase subunit PurL (765 aa).

H59 is a catalytic residue. Residues Y62 and K104 each contribute to the ATP site. Position 106 (E106) interacts with Mg(2+). Substrate-binding positions include S107–H110 and R129. Catalysis depends on H108, which acts as the Proton acceptor. Residue D130 coordinates Mg(2+). Residue Q254 coordinates substrate. D282 serves as a coordination point for Mg(2+). E326–Q328 provides a ligand contact to substrate. Positions 522 and 559 each coordinate ATP. Position 560 (N560) interacts with Mg(2+). S562 contacts substrate.

This sequence belongs to the FGAMS family. Monomer. Part of the FGAM synthase complex composed of 1 PurL, 1 PurQ and 2 PurS subunits.

It localises to the cytoplasm. The catalysed reaction is N(2)-formyl-N(1)-(5-phospho-beta-D-ribosyl)glycinamide + L-glutamine + ATP + H2O = 2-formamido-N(1)-(5-O-phospho-beta-D-ribosyl)acetamidine + L-glutamate + ADP + phosphate + H(+). The protein operates within purine metabolism; IMP biosynthesis via de novo pathway; 5-amino-1-(5-phospho-D-ribosyl)imidazole from N(2)-formyl-N(1)-(5-phospho-D-ribosyl)glycinamide: step 1/2. Its function is as follows. Part of the phosphoribosylformylglycinamidine synthase complex involved in the purines biosynthetic pathway. Catalyzes the ATP-dependent conversion of formylglycinamide ribonucleotide (FGAR) and glutamine to yield formylglycinamidine ribonucleotide (FGAM) and glutamate. The FGAM synthase complex is composed of three subunits. PurQ produces an ammonia molecule by converting glutamine to glutamate. PurL transfers the ammonia molecule to FGAR to form FGAM in an ATP-dependent manner. PurS interacts with PurQ and PurL and is thought to assist in the transfer of the ammonia molecule from PurQ to PurL. This Thermobifida fusca (strain YX) protein is Phosphoribosylformylglycinamidine synthase subunit PurL.